The following is a 253-amino-acid chain: Triosephosphate isomerase (253 aa).

Residue 8–10 (NWK) coordinates substrate. His-93 (electrophile) is an active-site residue. Glu-165 acts as the Proton acceptor in catalysis. Residues Gly-171, Ser-210, and 231–232 (GG) each bind substrate.

The protein belongs to the triosephosphate isomerase family. In terms of assembly, homodimer.

It is found in the cytoplasm. It carries out the reaction D-glyceraldehyde 3-phosphate = dihydroxyacetone phosphate. It participates in carbohydrate biosynthesis; gluconeogenesis. Its pathway is carbohydrate degradation; glycolysis; D-glyceraldehyde 3-phosphate from glycerone phosphate: step 1/1. In terms of biological role, involved in the gluconeogenesis. Catalyzes stereospecifically the conversion of dihydroxyacetone phosphate (DHAP) to D-glyceraldehyde-3-phosphate (G3P). The chain is Triosephosphate isomerase from Francisella tularensis subsp. tularensis (strain FSC 198).